Consider the following 299-residue polypeptide: Protoheme IX farnesyltransferase (299 aa).

The next 8 helical transmembrane spans lie at 24–44 (VVAL…DQGM), 46–66 (WNAL…AAAI), 94–114 (VHAL…LAWG), 118–138 (LTAW…TLFL), 146–166 (IVLG…SVTG), 172–192 (ALLL…ALAV), 232–252 (LPFI…ALGV), and 278–298 (ITYL…PVTL).

It belongs to the UbiA prenyltransferase family. Protoheme IX farnesyltransferase subfamily.

The protein resides in the cell inner membrane. The enzyme catalyses heme b + (2E,6E)-farnesyl diphosphate + H2O = Fe(II)-heme o + diphosphate. The protein operates within porphyrin-containing compound metabolism; heme O biosynthesis; heme O from protoheme: step 1/1. Converts heme B (protoheme IX) to heme O by substitution of the vinyl group on carbon 2 of heme B porphyrin ring with a hydroxyethyl farnesyl side group. In Hahella chejuensis (strain KCTC 2396), this protein is Protoheme IX farnesyltransferase.